The primary structure comprises 748 residues: E3 ubiquitin-protein ligase SMURF2 (748 aa).

A C2 domain is found at 1-119; sequence MSNPGGRRNG…TGYQRLDLCK (119 aa). A Glycyl lysine isopeptide (Lys-Gly) (interchain with G-Cter in ubiquitin) cross-link involves residue Lys-119. 3 consecutive WW domains span residues 157-190, 251-284, and 297-330; these read NDLPDGWEERRTASGRIQYLNHITRTTQWERPTR, PDLPEGYEQRTTQQGQVYFLHTQTGVSTWHDPRV, and GPLPPGWEIRNTATGRVYFVDHNNRTTQFTDPRL. The region spanning 414-748 is the HECT domain; it reads RPKDLWKRLM…IEETCGFAVE (335 aa). Cys-716 serves as the catalytic Glycyl thioester intermediate.

In terms of assembly, interacts (via WW domains) with SMAD1. Interacts (via WW domains) with SMAD2 (via PY-motif). Interacts (via WW domains) with SMAD3 (via PY-motif). Interacts with SMAD6. Interacts with SMAD7 (via PY-motif) and TGFBR1; SMAD7 recruits SMURF2 to the TGF-beta receptor and regulates its degradation. Does not interact with SMAD4; SMAD4 lacks a PY-motif. Interacts with AIMP1. Interacts with SNON. Interacts with STAMBP and RNF11. May interact with NDFIP1 and NDFIP2; this interaction induces the E3 ubiquitin-protein ligase activity. Interacts with TTC3. As to quaternary structure, (Microbial infection) Interacts (via WW domains) with EBOV and MARV VP40 (via PPXY motif); the interaction facilitates VP40 virus-like particle budding. Post-translationally, auto-ubiquitinated and ubiquitinated in the presence of RNF11 and UBE2D1. Ubiquitinated by the SCF(FBXL15) complex and TTC3, leading to its degradation by the proteasome. 'Lys-48'-linked polyubiquitination mediated by TRAF4 at Lys-119 leads to SMURF2 proteasomal degradation. As to expression, widely expressed.

Its subcellular location is the nucleus. The protein localises to the cytoplasm. It is found in the cell membrane. It localises to the membrane raft. The enzyme catalyses S-ubiquitinyl-[E2 ubiquitin-conjugating enzyme]-L-cysteine + [acceptor protein]-L-lysine = [E2 ubiquitin-conjugating enzyme]-L-cysteine + N(6)-ubiquitinyl-[acceptor protein]-L-lysine.. It participates in protein modification; protein ubiquitination. Activated by NDFIP1- and NDFIP2-binding. Its function is as follows. E3 ubiquitin-protein ligase which accepts ubiquitin from an E2 ubiquitin-conjugating enzyme in the form of a thioester and then directly transfers the ubiquitin to targeted substrates. Interacts with SMAD7 to trigger SMAD7-mediated transforming growth factor beta/TGF-beta receptor ubiquitin-dependent degradation, thereby down-regulating TGF-beta signaling. In addition, interaction with SMAD7 activates autocatalytic degradation, which is prevented by interaction with AIMP1. Also forms a stable complex with TGF-beta receptor-mediated phosphorylated SMAD1, SMAD2 and SMAD3, and targets SMAD1 and SMAD2 for ubiquitination and proteasome-mediated degradation. SMAD2 may recruit substrates, such as SNON, for ubiquitin-dependent degradation. Negatively regulates TGFB1-induced epithelial-mesenchymal transition and myofibroblast differentiation. Functionally, (Microbial infection) In case of filoviruses Ebola/EBOV and Marburg/MARV infection, the complex formed by viral matrix protein VP40 and SMURF2 facilitates virus budding. This chain is E3 ubiquitin-protein ligase SMURF2, found in Homo sapiens (Human).